An 871-amino-acid polypeptide reads, in one-letter code: Transient receptor potential cation channel subfamily V member 4 (871 aa).

2 disordered regions span residues 1–68 and 110–143; these read MADP…PNLR and YGTY…PQPP. Residues 1-469 lie on the Cytoplasmic side of the membrane; the sequence is MADPGDGPRA…RDKWRKFGAV (469 aa). Phosphotyrosine; by SRC-type Tyr-kinases is present on Y110. The segment covering 116 to 129 has biased composition (basic and acidic residues); it reads HPSDNKRWRRKVVE. ATP is bound by residues K192, K197, N201, 236–239, and R248; that span reads YRGQ. ANK repeat units lie at residues 237-266 and 284-313; these read RGQT…DVHA and FGEL…KKAD. 249-251 contacts a 1,2-diacyl-sn-glycero-3-phospho-(1D-myo-inositol-4,5-bisphosphate); that stretch reads RCK. Y253 carries the phosphotyrosine; by LYN modification. A 1,2-diacyl-sn-glycero-3-phospho-(1D-myo-inositol-4,5-bisphosphate) contacts are provided by residues 296–299 and K344; that span reads NQPH. An ANK 3 repeat occupies 369–398; it reads DGLSPLMMAAKTGKIGVFQHIIRREVTDED. The helical transmembrane segment at 470–490 threads the bilayer; that stretch reads SFYINVVSYLCAMVIFTLTAY. Residues 491–507 lie on the Extracellular side of the membrane; sequence YQPLEGTPPYPYRTTVD. Residues 508–534 form a helical membrane-spanning segment; sequence YLRLAGEVITLFTGVLFFFTSIKDLFT. The Cytoplasmic portion of the chain corresponds to 535–547; that stretch reads KKCPGVNSLFVDG. A helical membrane pass occupies residues 548–568; that stretch reads SFQLLYFIYSVLVVVSAALYL. Topologically, residues 569-572 are extracellular; that stretch reads AGIE. The chain crosses the membrane as a helical span at residues 573–593; the sequence is AYLAVMVFALVLGWMNALYFT. Residues 594-608 lie on the Cytoplasmic side of the membrane; it reads RGLKLTGTYSIMIQK. A helical transmembrane segment spans residues 609–636; the sequence is ILFKDLFRFLLVYLLFMIGYASALVTLL. Residues 637 to 665 lie on the Extracellular side of the membrane; that stretch reads NPCTNMKVCDEDQSNCTVPTYPACRDSET. N-linked (GlcNAc...) asparagine glycosylation occurs at N651. The pore-forming intramembrane region spans 666-685; sequence FSAFLLDLFKLTIGMGDLEM. Residues 679 to 682 carry the Selectivity filter motif; sequence GMGD. D682 lines the Ca(2+) pocket. Over 686–693 the chain is Extracellular; sequence LSSAKYPV. The chain crosses the membrane as a helical span at residues 694–722; it reads VFILLLVTYIILTFVLLLNMLIALMGETV. Topologically, residues 723–871 are cytoplasmic; the sequence is GQVSKESKHI…PKWRTDDAPL (149 aa). At Y805 the chain carries Phosphotyrosine; by SRC-type Tyr-kinases. Positions 812 to 831 are interaction with calmodulin and ITPR3; sequence HTVGRLRRDRWSSVVPRVVE. S824 carries the phosphoserine; by PKC and PKA modification. The interval 850–871 is disordered; the sequence is NPNCDGHQQGYAPKWRTDDAPL.

It belongs to the transient receptor (TC 1.A.4) family. TrpV subfamily. TRPV4 sub-subfamily. As to quaternary structure, homotetramer. Interacts with calmodulin. Interacts with CTNNB1. The TRPV4 and CTNNB1 complex can interact with CDH1. Part of a complex containing MLC1, AQP4, HEPACAM and ATP1B1. Interacts with MAP7 and Src family Tyr protein kinases LYN, SRC, FYN, HCK, LCK and YES. Interacts with PACSIN1, PACSIN2 and PACSIN3 (via SH3 domain). Interacts with ITPR3. Interacts with AQP5; the interaction is probably indirect and regulates TRPV4 activation by hypotonicity. Interacts with ANO1. Interacts (via C-terminus) with PKD2 (via C-terminus). Interacts with DDX3X; this interaction is decreased when the channel is activated. Post-translationally, N-glycosylated. As to expression, detected in liver, kidney, heart, brain cortex, cerebellum and brainstem (at protein level). Expressed in salivary glands (at protein level). Expressed in heart, lung, spleen, liver, kidney, brain, skeletal muscle and testis. In the central nervous system, expressed in the lamina terminalis (arched vascular organ and neurons of the subfornical organ), median preoptic area, ventral hippocampal commissure, and ependymal cells of the choroid plexus. In the cochlea, expressed in both inner and outer hair cells, and in marginal cells of the cochlear stria vascularis. Expressed in large neurons of the trigeminal ganglion. In the kidney cortex, strongly expressed by epithelial cells of tubules and much weaker in glomeruli.

It is found in the cell membrane. Its subcellular location is the apical cell membrane. The protein localises to the cell junction. It localises to the adherens junction. The protein resides in the cell projection. It is found in the cilium. It catalyses the reaction Ca(2+)(in) = Ca(2+)(out). Its function is as follows. Non-selective calcium permeant cation channel involved in osmotic sensitivity and mechanosensitivity. Activation by exposure to hypotonicity within the physiological range exhibits an outward rectification. Also activated by heat, low pH, citrate and phorbol esters. Increase of intracellular Ca(2+) potentiates currents. Channel activity seems to be regulated by a calmodulin-dependent mechanism with a negative feedback mechanism. Acts as a regulator of intracellular Ca(2+) in synoviocytes. Plays an obligatory role as a molecular component in the nonselective cation channel activation induced by 4-alpha-phorbol 12,13-didecanoate and hypotonic stimulation in synoviocytes and also regulates production of IL-8. Together with PKD2, forms mechano- and thermosensitive channels in cilium. Promotes cell-cell junction formation in skin keratinocytes and plays an important role in the formation and/or maintenance of functional intercellular barriers. Negatively regulates expression of PPARGC1A, UCP1, oxidative metabolism and respiration in adipocytes. Regulates expression of chemokines and cytokines related to pro-inflammatory pathway in adipocytes. Together with AQP5, controls regulatory volume decrease in salivary epithelial cells. Required for normal development and maintenance of bone and cartilage. In its inactive state, may sequester DDX3X at the plasma membrane. When activated, the interaction between both proteins is affected and DDX3X relocalizes to the nucleus. In neurons of the central nervous system, could play a role in triggering voluntary water intake in response to increased sodium concentration in body fluid. This is Transient receptor potential cation channel subfamily V member 4 (Trpv4) from Mus musculus (Mouse).